Here is a 330-residue protein sequence, read N- to C-terminus: Cathepsin K (330 aa).

Positions 1-16 (MWGLEVLLLLPMASFA) are cleaved as a signal peptide. The propeptide at 17 to 115 (LYPEEILDTQ…TLYIPDWESR (99 aa)) is activation peptide. Residue Asn-104 is glycosylated (N-linked (GlcNAc...) asparagine). Intrachain disulfides connect Cys-137–Cys-178, Cys-171–Cys-211, and Cys-270–Cys-319. Cys-140 is an active-site residue. Active-site residues include His-277 and Asn-297.

It belongs to the peptidase C1 family.

The protein localises to the lysosome. Its subcellular location is the secreted. It is found in the apical cell membrane. The catalysed reaction is Broad proteolytic activity. With small-molecule substrates and inhibitors, the major determinant of specificity is P2, which is preferably Leu, Met &gt; Phe, and not Arg.. Its function is as follows. Thiol protease involved in osteoclastic bone resorption and may participate partially in the disorder of bone remodeling. Displays potent endoprotease activity against fibrinogen at acid pH. May play an important role in extracellular matrix degradation. Involved in the release of thyroid hormone thyroxine (T4) by limited proteolysis of TG/thyroglobulin in the thyroid follicle lumen. The protein is Cathepsin K (CTSK) of Canis lupus familiaris (Dog).